The sequence spans 340 residues: Immunoglobulin-binding protein 1 family member C (340 aa).

Disordered regions lie at residues 223-243 (KDSSREASTSNSCHQKRPPMK) and 292-340 (PEEF…QNMG). Positions 303–314 (EDQEKEEEDDEQ) are enriched in acidic residues. Over residues 318–330 (RAREWDDWKDTHP) the composition is skewed to basic and acidic residues.

It belongs to the IGBP1/TAP42 family.

This chain is Immunoglobulin-binding protein 1 family member C, found in Homo sapiens (Human).